The sequence spans 377 residues: MSEMDYYEVLEVSRDCSGAELKKAYRKLALKYHPDRNPDDQEAEEKFKIVNEAYQVLSDDEKRTIYDRYGKEGLEGQGMGGGFGGANMDDIMDIFNSMFGGGGGGFGGFGRTRRDPSQKYALDFEIELPLAFNEAVFGCEKKIDITYKTPCEECGGTGAKDGKMETCDYCGGQGQVLMRQGPMQFAQTCPKCHGEGRKIAQKCPSCQGKGYHEETETVTIKVPAGVDSGNRLRVPGHGNEAKNGQRGDLYLTFYVEEDEHFIRNGNDIYIEVPVFFTQAILGETISIPTLDGELELELKQSTKDKEQFIFEGEGVPDVHNGRKGRLIAQVRMILPKKINEEQKELLEKLQESYGVESRPHKSTFESAFDKVKNWFKN.

The J domain occupies 5-70 (DYYEVLEVSR…EKRTIYDRYG (66 aa)). The segment at 138–215 (GCEKKIDITY…CQGKGYHEET (78 aa)) adopts a CR-type zinc-finger fold. The Zn(2+) site is built by C151, C154, C167, C170, C189, C192, C203, and C206. CXXCXGXG motif repeat units lie at residues 151–158 (CEECGGTG), 167–174 (CDYCGGQG), 189–196 (CPKCHGEG), and 203–210 (CPSCQGKG).

This sequence belongs to the DnaJ family. Homodimer. It depends on Zn(2+) as a cofactor.

It localises to the cytoplasm. Its function is as follows. Participates actively in the response to hyperosmotic and heat shock by preventing the aggregation of stress-denatured proteins and by disaggregating proteins, also in an autonomous, DnaK-independent fashion. Unfolded proteins bind initially to DnaJ; upon interaction with the DnaJ-bound protein, DnaK hydrolyzes its bound ATP, resulting in the formation of a stable complex. GrpE releases ADP from DnaK; ATP binding to DnaK triggers the release of the substrate protein, thus completing the reaction cycle. Several rounds of ATP-dependent interactions between DnaJ, DnaK and GrpE are required for fully efficient folding. Also involved, together with DnaK and GrpE, in the DNA replication of plasmids through activation of initiation proteins. The sequence is that of Chaperone protein DnaJ from Sulfurovum sp. (strain NBC37-1).